Consider the following 481-residue polypeptide: 3-isopropylmalate dehydratase large subunit (481 aa).

[4Fe-4S] cluster is bound by residues C355, C415, and C418.

This sequence belongs to the aconitase/IPM isomerase family. LeuC type 1 subfamily. As to quaternary structure, heterodimer of LeuC and LeuD. The cofactor is [4Fe-4S] cluster.

It catalyses the reaction (2R,3S)-3-isopropylmalate = (2S)-2-isopropylmalate. It functions in the pathway amino-acid biosynthesis; L-leucine biosynthesis; L-leucine from 3-methyl-2-oxobutanoate: step 2/4. Its function is as follows. Catalyzes the isomerization between 2-isopropylmalate and 3-isopropylmalate, via the formation of 2-isopropylmaleate. This Symbiobacterium thermophilum (strain DSM 24528 / JCM 14929 / IAM 14863 / T) protein is 3-isopropylmalate dehydratase large subunit.